The primary structure comprises 94 residues: Large ribosomal subunit protein bL25 (94 aa).

It belongs to the bacterial ribosomal protein bL25 family. As to quaternary structure, part of the 50S ribosomal subunit; part of the 5S rRNA/L5/L18/L25 subcomplex. Contacts the 5S rRNA. Binds to the 5S rRNA independently of L5 and L18.

Functionally, this is one of the proteins that binds to the 5S RNA in the ribosome where it forms part of the central protuberance. The protein is Large ribosomal subunit protein bL25 of Escherichia coli (strain K12 / DH10B).